The following is a 312-amino-acid chain: GDSL esterase/lipase At2g38180 (312 aa).

A signal peptide spans 1–22; the sequence is MVGPVRPQIVLFGSSIVQYSFT. The N-linked (GlcNAc...) asparagine glycan is linked to N79. Residues 285–312 are disordered; sequence EPPHPVSLCDHELTQNEQLEPPQPTARL.

This sequence belongs to the 'GDSL' lipolytic enzyme family.

The protein resides in the secreted. The sequence is that of GDSL esterase/lipase At2g38180 from Arabidopsis thaliana (Mouse-ear cress).